The primary structure comprises 384 residues: Substance-K receptor (384 aa).

Topologically, residues 1 to 32 are extracellular; the sequence is MGACVVMTDINISSGLDSNATGITAFSMPGWQ. N-linked (GlcNAc...) asparagine glycosylation is found at Asn-11 and Asn-19. A helical membrane pass occupies residues 33-56; it reads LALWTAAYLALVLVAVMGNATVIW. The Cytoplasmic portion of the chain corresponds to 57 to 69; it reads IILAHQRMRTVTN. A helical membrane pass occupies residues 70 to 90; that stretch reads YFIVNLALADLCMAAFNAAFN. Residues 91 to 107 are Extracellular-facing; the sequence is FVYASHNIWYFGRAFCY. A disulfide bond links Cys-106 and Cys-181. Residues 108 to 129 form a helical membrane-spanning segment; that stretch reads FQNLFPITAMFVSIYSMTAIAA. Over 130-149 the chain is Cytoplasmic; it reads DRYMAIVHPFQPRLSAPGTR. Residues 150-170 traverse the membrane as a helical segment; sequence AVIAGIWLVALALAFPQCFYS. Over 171 to 196 the chain is Extracellular; that stretch reads TITTDEGATKCVVAWPEDSGGKMLLL. The chain crosses the membrane as a helical span at residues 197-218; that stretch reads YHLIVIALIYFLPLVVMFVAYS. Residues 219–251 are Cytoplasmic-facing; sequence VIGLTLWRRSVPGHQAHGANLRHLQAKKKFVKT. The helical transmembrane segment at 252–272 threads the bilayer; it reads MVLVVVTFAICWLPYHLYFIL. Residues 273 to 290 are Extracellular-facing; sequence GTFQEDIYCHKFIQQVYL. The chain crosses the membrane as a helical span at residues 291 to 310; sequence ALFWLAMSSTMYNPIIYCCL. Over 311-384 the chain is Cytoplasmic; the sequence is NHRFRSGFRL…SPQAGVSTEP (74 aa). The S-palmitoyl cysteine moiety is linked to residue Cys-324.

This sequence belongs to the G-protein coupled receptor 1 family.

It is found in the cell membrane. Its function is as follows. This is a receptor for the tachykinin neuropeptide substance K (neurokinin A). It is associated with G proteins that activate a phosphatidylinositol-calcium second messenger system. The rank order of affinity of this receptor to tachykinins is: substance K &gt; neuromedin-K &gt; substance P. This Bos taurus (Bovine) protein is Substance-K receptor (TACR2).